The following is a 249-amino-acid chain: tRNA (guanine-N(1)-)-methyltransferase (249 aa).

S-adenosyl-L-methionine contacts are provided by residues Gly113 and 133-138 (IGDYVL).

It belongs to the RNA methyltransferase TrmD family. Homodimer.

It localises to the cytoplasm. It catalyses the reaction guanosine(37) in tRNA + S-adenosyl-L-methionine = N(1)-methylguanosine(37) in tRNA + S-adenosyl-L-homocysteine + H(+). Its function is as follows. Specifically methylates guanosine-37 in various tRNAs. The protein is tRNA (guanine-N(1)-)-methyltransferase of Aeromonas salmonicida (strain A449).